The following is a 228-amino-acid chain: Octanoyltransferase (228 aa).

Residues 31-212 (GETDGILILL…KFSEVFGIHF (182 aa)) enclose the BPL/LPL catalytic domain. Substrate is bound by residues 76–83 (RGGKITFH), 143–145 (AIG), and 156–158 (GIA). Catalysis depends on Cys174, which acts as the Acyl-thioester intermediate.

Belongs to the LipB family.

The protein localises to the cytoplasm. The catalysed reaction is octanoyl-[ACP] + L-lysyl-[protein] = N(6)-octanoyl-L-lysyl-[protein] + holo-[ACP] + H(+). Its pathway is protein modification; protein lipoylation via endogenous pathway; protein N(6)-(lipoyl)lysine from octanoyl-[acyl-carrier-protein]: step 1/2. Catalyzes the transfer of endogenously produced octanoic acid from octanoyl-acyl-carrier-protein onto the lipoyl domains of lipoate-dependent enzymes. Lipoyl-ACP can also act as a substrate although octanoyl-ACP is likely to be the physiological substrate. The protein is Octanoyltransferase of Thermoanaerobacter sp. (strain X514).